Reading from the N-terminus, the 256-residue chain is MANEGEEIELTEFPETEKERKDEEKLSSCSEETTNTSSSSGSDHVPVPIEVNVIIQNSSRTEDELQNSKEIELTGFQGKLSSCSEETTAPSSSYSSKQASVFIEENGDNETSTYRPQNVLTNLNSLYTTFEDARAQGKGMVRHKSEDLQSFLEKYPPDFRKPKRDLSATWDPGMPTPPLPPRPANLGERQASTVRLHVKESNCKQPRERKANERNIVKDLKRLENKINVIICLVVVILAVLLLVTVLSILHIGMKS.

Over residues 1 to 14 (MANEGEEIELTEFP) the composition is skewed to acidic residues. The tract at residues 1–49 (MANEGEEIELTEFPETEKERKDEEKLSSCSEETTNTSSSSGSDHVPVPI) is disordered. Residues 1-228 (MANEGEEIEL…DLKRLENKIN (228 aa)) are Cytoplasmic-facing. The segment covering 15–26 (ETEKERKDEEKL) has biased composition (basic and acidic residues). The span at 27 to 42 (SSCSEETTNTSSSSGS) shows a compositional bias: low complexity. Tyr114 carries the post-translational modification Phosphotyrosine; by host LCK. Phosphotyrosine; by host is present on Tyr127. Residues 146-155 (EDLQSFLEKY) form a CSKH/LBD2 region. The segment at 162-183 (PKRDLSATWDPGMPTPPLPPRP) is disordered. An SH3B/LBD1 region spans residues 174 to 183 (MPTPPLPPRP). Pro residues predominate over residues 174–183 (MPTPPLPPRP). The helical transmembrane segment at 229-249 (VIICLVVVILAVLLLVTVLSI) threads the bilayer. Topologically, residues 250–256 (LHIGMKS) are extracellular.

As to quaternary structure, binds host LCK, human WDR48 and human NXF1/TAP. Forms a complex with activated LCK and STAT1 and STAT3. Phosphorylation on Tyr-114 acts as a docking site for the recruitment of STATs 1 and 3.

The protein resides in the host cell membrane. Functionally, plays a critical role in virus induced T-cell transformation. Binds to T-cell-specific tyrosine kinase LCK SH2 and SH3 domains, thereby activating its kinase activity. Once phosphorylated by host LCK, forms a complex with at least STAT 1 and 3, resulting on the phosphorylation of STAT3 and presumably STAT1, and their migration into the nucleus to induce transcription of target genes. Stimulates host ILF3/NF-AT-90 activity. Association with host NXF1/TAP transduces the signal up-regulating surface expression of adhesion molecules as well as activating NF-kappa-B activity. Acts synergistically with StpC to stimulate NF-kappa-B activity and interleukin-2 gene expression. Activation of NF-kappa-B protects lymphocytes from apoptosis, thereby facilitating viral induced cell transformation. May cause down-regulation of host LCK and cell apoptosis when stably overexpressed ex vivo. Interaction with WDR48 induce degradation of T-cell receptor in a lysosome-dependent fashion, when both proteins are overexpressed. The biological effect of this interaction remains controversial since no T-cell receptor degradation is observed in infected cells. This is Tyrosine-protein kinase-interacting protein from Saimiri sciureus (Common squirrel monkey).